A 670-amino-acid chain; its full sequence is Pescadillo homolog (670 aa).

A coiled-coil region spans residues 292-321 (GANQAQAKVKEAESKRSLMEEELLKVRELF). The 87-residue stretch at 316–402 (KVRELFRGLT…QMLPVTGYRI (87 aa)) folds into the BRCT domain. The interval 643–670 (RQRAEAKGKKLKEKKADNPYKKLPKWVQ) is disordered. Residues 644–662 (QRAEAKGKKLKEKKADNPY) show a composition bias toward basic and acidic residues.

The protein belongs to the pescadillo family.

The protein localises to the nucleus. The protein resides in the nucleolus. It localises to the nucleoplasm. Required for maturation of ribosomal RNAs and formation of the large ribosomal subunit. The polypeptide is Pescadillo homolog (Leishmania braziliensis).